The primary structure comprises 146 residues: Hemoglobin subunit beta (146 aa).

V1 is subject to N-acetylvaline. Residues 2–146 form the Globin domain; that stretch reads HLTADEKSAV…VATALGHKYH (145 aa). T12 carries the phosphothreonine modification. Phosphoserine is present on S44. N6-acetyllysine is present on K59. H63 is a heme b binding site. K82 is modified (N6-acetyllysine). H92 lines the heme b pocket. C93 is modified (S-nitrosocysteine). K144 bears the N6-acetyllysine mark.

This sequence belongs to the globin family. In terms of assembly, heterotetramer of two alpha chains and two beta chains. As to expression, red blood cells.

Involved in oxygen transport from the lung to the various peripheral tissues. The protein is Hemoglobin subunit beta (HBB) of Antrozous pallidus (Pallid bat).